The sequence spans 317 residues: Ribosomal protein L11 methyltransferase (317 aa).

Residues Thr-169, Gly-190, Asp-211, and Asn-256 each contribute to the S-adenosyl-L-methionine site.

It belongs to the methyltransferase superfamily. PrmA family.

It localises to the cytoplasm. The enzyme catalyses L-lysyl-[protein] + 3 S-adenosyl-L-methionine = N(6),N(6),N(6)-trimethyl-L-lysyl-[protein] + 3 S-adenosyl-L-homocysteine + 3 H(+). Functionally, methylates ribosomal protein L11. This is Ribosomal protein L11 methyltransferase from Helicobacter hepaticus (strain ATCC 51449 / 3B1).